We begin with the raw amino-acid sequence, 503 residues long: 3-octaprenyl-4-hydroxybenzoate carboxy-lyase (503 aa).

Mn(2+) is bound at residue Asn-176. Prenylated FMN is bound by residues 179–181, 193–195, and 198–199; these read IYR, RWL, and RG. A Mn(2+)-binding site is contributed by Glu-242. Asp-303 functions as the Proton donor in the catalytic mechanism.

This sequence belongs to the UbiD family. As to quaternary structure, homohexamer. Prenylated FMN is required as a cofactor. Mn(2+) serves as cofactor.

The protein localises to the cell membrane. It carries out the reaction a 4-hydroxy-3-(all-trans-polyprenyl)benzoate + H(+) = a 2-(all-trans-polyprenyl)phenol + CO2. It functions in the pathway cofactor biosynthesis; ubiquinone biosynthesis. In terms of biological role, catalyzes the decarboxylation of 3-octaprenyl-4-hydroxy benzoate to 2-octaprenylphenol, an intermediate step in ubiquinone biosynthesis. The protein is 3-octaprenyl-4-hydroxybenzoate carboxy-lyase of Ralstonia pickettii (strain 12J).